The sequence spans 342 residues: (Lyso)-N-acylphosphatidylethanolamine lipase (342 aa).

One can recognise an AB hydrolase-1 domain in the interval 70-324 (PLVMVHGFGG…IEGASHHVYA (255 aa)).

This sequence belongs to the peptidase S33 family. ABHD4/ABHD5 subfamily.

The catalysed reaction is N-hexadecanoyl-1,2-di-(9Z-octadecenoyl)-sn-glycero-3-phosphoethanolamine + H2O = N-hexadecanoyl-1-(9Z-octadecenoyl)-sn-glycero-3-phosphoethanolamine + (9Z)-octadecenoate + H(+). It catalyses the reaction an N-acyl-1,2-diacyl-sn-glycero-3-phosphoethanolamine + H2O = N,1-diacyl-sn-glycero-3-phosphoethanolamine + a fatty acid + H(+). The enzyme catalyses N-hexadecanoyl-1-(9Z-octadecenoyl)-sn-glycero-3-phosphoethanolamine + H2O = N-hexadecanoyl-sn-glycero-3-phosphoethanolamine + (9Z)-octadecenoate + H(+). It carries out the reaction N-octadecanoyl-1-(9Z-octadecenoyl)-sn-glycero-3-phosphoethanolamine + H2O = N-octadecanoyl-sn-glycero-3-phospho-ethanolamine + (9Z)-octadecenoate + H(+). The catalysed reaction is N-eicosanoyl-1-(9Z-octadecenoyl)-sn-glycero-3-phosphoethanolamine + H2O = N-eicosanoyl-sn-glycero-3-phosphoethanolamine + (9Z)-octadecenoate + H(+). It catalyses the reaction N,1-di-(9Z-octadecenoyl)-sn-glycero-3-phosphoethanolamine + H2O = N-(9Z-octadecenoyl)-sn-glycero-3-phosphoethanolamine + (9Z)-octadecenoate + H(+). The enzyme catalyses N-(5Z,8Z,11Z,14Z-eicosatetraenoyl)-1-(9Z-octadecenoyl)-sn-glycero-3-phosphoethanolamine + H2O = N-(5Z,8Z,11Z,14Z-eicosatetraenoyl)-sn-glycero-3-phosphoethanolamine + (9Z)-octadecenoate + H(+). It carries out the reaction 1-octadecanoyl-2-(9Z-octadecenoyl)-sn-glycero-3-phospho-(N-hexadecanoyl)-serine + H2O = 1-octadecanoyl-2-hydroxy-sn-glycero-3-phospho-(N-hexadecanoyl)-serine + (9Z)-octadecenoate + H(+). The catalysed reaction is 1-O-(1Z-octadecenoyl)-2-(9Z-octadecenoyl)-sn-glycero-3-phospho-N-hexadecanoyl-ethanolamine + H2O = 1-O-(1Z-octadecenyl)-sn-glycero-3-phospho-N-hexadecanoyl-ethanolamine + (9Z)-octadecenoate + H(+). It catalyses the reaction N,1-diacyl-sn-glycero-3-phosphoethanolamine + H2O = N-acyl-sn-glycero-3-phosphoethanolamine + a fatty acid + H(+). Functionally, lysophospholipase selective for N-acyl phosphatidylethanolamine (NAPE). Contributes to the biosynthesis of N-acyl ethanolamines, including the endocannabinoid anandamide by hydrolyzing the sn-1 and sn-2 acyl chains from N-acyl phosphatidylethanolamine (NAPE) generating glycerophospho-N-acyl ethanolamine (GP-NAE), an intermediate for N-acyl ethanolamine biosynthesis. Hydrolyzes substrates bearing saturated, monounsaturated, polyunsaturated N-acyl chains. Shows no significant activity towards other lysophospholipids, including lysophosphatidylcholine, lysophosphatidylethanolamine and lysophosphatidylserine. The sequence is that of (Lyso)-N-acylphosphatidylethanolamine lipase from Bos taurus (Bovine).